A 233-amino-acid polypeptide reads, in one-letter code: Sugar fermentation stimulation protein homolog (233 aa).

This sequence belongs to the SfsA family.

The chain is Sugar fermentation stimulation protein homolog from Teredinibacter turnerae (strain ATCC 39867 / T7901).